A 22-amino-acid polypeptide reads, in one-letter code: Odorant-binding protein 1 (22 aa).

It belongs to the calycin superfamily. Lipocalin family. As to quaternary structure, homodimer. In terms of processing, the N-terminus is blocked.

Functionally, binds the chemical odorant, 2-isobutyl-3-methoxypyrazine. This chain is Odorant-binding protein 1, found in Oryctolagus cuniculus (Rabbit).